The sequence spans 396 residues: Purine ribonucleoside efflux pump NepI (396 aa).

The Cytoplasmic portion of the chain corresponds to 1 to 21 (MSEFIAENRGADAITRPNWSA). Residues 22–42 (VFSVAFCVACLIIVEFLPVSL) form a helical membrane-spanning segment. Residues 43–54 (LTPMAQDLGISE) are Periplasmic-facing. Residues 55 to 75 (GVAGQSVTVTAFVAMFASLFI) form a helical membrane-spanning segment. Residues 76–85 (TQTIQATDRR) lie on the Cytoplasmic side of the membrane. The helical transmembrane segment at 86-106 (NVVILFAVLLTLSCLLVSFAN) threads the bilayer. Position 107 (Ser107) is a topological domain, periplasmic. A helical membrane pass occupies residues 108–128 (FSLLLIGRACLGLALGGFWAM). Residues 129–147 (SASLTMRLVPPRTVPKALS) lie on the Cytoplasmic side of the membrane. A helical membrane pass occupies residues 148–168 (VIFGAVSIALVIAAPLGSFLG). Topologically, residues 169 to 175 (ELIGWRN) are periplasmic. A helical membrane pass occupies residues 176–196 (VFNAAAVMGVLCIFWIIKSLP). Residues 197–215 (SLPGEPSHQKQNTFRLLQR) are Cytoplasmic-facing. The chain crosses the membrane as a helical span at residues 216 to 236 (PGVMAGMIAIFMSFAGQFAFF). Topologically, residues 237–255 (TYIRPVYMNLAGFSVDGLT) are periplasmic. A helical membrane pass occupies residues 256 to 276 (LVLLSFGIASFIGTSLSSFIL). The Cytoplasmic segment spans residues 277–281 (KRSVK). A helical transmembrane segment spans residues 282-302 (LALAGAPLILAVSALVLTLWG). Residues 303–305 (SDK) are Periplasmic-facing. Residues 306 to 326 (IVATGVAIIWGLTFALVPVGW) traverse the membrane as a helical segment. Residues 327 to 343 (STWITRSLADQAEKAGS) lie on the Cytoplasmic side of the membrane. A helical membrane pass occupies residues 344–364 (IQVAVIQLANTCGAAIGGYAL). The Periplasmic segment spans residues 365 to 366 (DN). A helical transmembrane segment spans residues 367-387 (IGLTSPLMFSGTLMLLTALLV). At 388-396 (TAKVKMKKS) the chain is on the cytoplasmic side.

It belongs to the major facilitator superfamily. DHA1 family. NepI (TC 2.A.1.2.26) subfamily.

It localises to the cell inner membrane. The catalysed reaction is inosine(in) + H(+)(out) = inosine(out) + H(+)(in). It carries out the reaction guanosine(in) + H(+)(out) = guanosine(out) + H(+)(in). Functionally, involved in the efflux of purine ribonucleosides, such as inosine and guanosine. The chain is Purine ribonucleoside efflux pump NepI from Shigella sonnei (strain Ss046).